The sequence spans 1086 residues: WD repeat-containing protein 64 (1086 aa).

WD repeat units follow at residues 129-168 (RRRD…WITG), 170-199 (DYLG…SSQE), 321-360 (AMPR…KPVG), 364-403 (GHMF…VLQV), 411-448 (PGDM…QDTK), 453-492 (THER…QIYQ), 498-537 (GLSI…EMKM), 560-602 (QVKQ…PYLQ), and 642-683 (IVDV…VKEI). Residues 724–749 (ICSSTQCDSSKGPQSSKGSKQSIHDA) form a disordered region. A compositionally biased stretch (low complexity) spans 732–744 (SSKGPQSSKGSKQ). WD repeat units lie at residues 765–806 (ASRK…KDML), 809–850 (TKHS…DPPH), and 863–902 (AHSL…YCGY). The disordered stretch occupies residues 1047 to 1069 (DKVKREEAPEMTEGSRRKSLKRN). Residues 1049-1062 (VKREEAPEMTEGSR) show a composition bias toward basic and acidic residues.

This chain is WD repeat-containing protein 64 (Wdr64), found in Mus musculus (Mouse).